Reading from the N-terminus, the 317-residue chain is Inositol oxygenase 4 (317 aa).

Substrate contacts are provided by residues arginine 58 and 115-117 (DES). The Fe cation site is built by histidine 128, histidine 153, and aspartate 154. Residues lysine 157 and 174–175 (GD) contribute to the substrate site. Histidine 226, histidine 252, and aspartate 285 together coordinate Fe cation. Residue 252–253 (HS) coordinates substrate.

This sequence belongs to the myo-inositol oxygenase family. Fe cation serves as cofactor. Expressed in flowers, leaves, siliques, and to a lesser extent in roots.

The protein localises to the cytoplasm. The enzyme catalyses myo-inositol + O2 = D-glucuronate + H2O + H(+). The protein operates within polyol metabolism; myo-inositol degradation into D-glucuronate; D-glucuronate from myo-inositol: step 1/1. Its function is as follows. Catalyzes the oxygenative cleavage of myo-inositol to D-glucuronate. Involved in the biosynthesis of UDP-glucuronic acid (UDP-GlcA), providing nucleotide sugars for cell-wall polymers. May be also involved in plant ascorbate biosynthesis. The sequence is that of Inositol oxygenase 4 (MIOX4) from Arabidopsis thaliana (Mouse-ear cress).